We begin with the raw amino-acid sequence, 202 residues long: Glycoprotein U22 (202 aa).

The N-terminal stretch at 1–20 is a signal peptide; sequence MVPQGCSLVWVSALYVSVIA. Residues N54, N107, N112, and N125 are each glycosylated (N-linked (GlcNAc...) asparagine; by host). A helical transmembrane segment spans residues 172 to 192; sequence FVYYCISVYLFAVVVLCSCWF.

The protein resides in the membrane. In Homo sapiens (Human), this protein is Glycoprotein U22 (U22).